Here is a 310-residue protein sequence, read N- to C-terminus: Nucleotide-binding protein Mmc1_3333 (310 aa).

19-26 (GLSGAGKS) provides a ligand contact to ATP.

It belongs to the RapZ-like family.

Its function is as follows. Displays ATPase and GTPase activities. The chain is Nucleotide-binding protein Mmc1_3333 from Magnetococcus marinus (strain ATCC BAA-1437 / JCM 17883 / MC-1).